We begin with the raw amino-acid sequence, 299 residues long: Bifunctional protein FolD (299 aa).

NADP(+) is bound by residues 179–181 (GPG) and I245.

This sequence belongs to the tetrahydrofolate dehydrogenase/cyclohydrolase family. As to quaternary structure, homodimer.

The enzyme catalyses (6R)-5,10-methylene-5,6,7,8-tetrahydrofolate + NADP(+) = (6R)-5,10-methenyltetrahydrofolate + NADPH. It catalyses the reaction (6R)-5,10-methenyltetrahydrofolate + H2O = (6R)-10-formyltetrahydrofolate + H(+). Its pathway is one-carbon metabolism; tetrahydrofolate interconversion. In terms of biological role, catalyzes the oxidation of 5,10-methylenetetrahydrofolate to 5,10-methenyltetrahydrofolate and then the hydrolysis of 5,10-methenyltetrahydrofolate to 10-formyltetrahydrofolate. The chain is Bifunctional protein FolD from Deinococcus radiodurans (strain ATCC 13939 / DSM 20539 / JCM 16871 / CCUG 27074 / LMG 4051 / NBRC 15346 / NCIMB 9279 / VKM B-1422 / R1).